Reading from the N-terminus, the 319-residue chain is tRNA (guanine(9)-N(1))-methyltransferase Trmt10A (319 aa).

Disordered stretches follow at residues 16-87 (LSLN…KRQL) and 275-319 (AKIT…SLDS). A compositionally biased stretch (polar residues) spans 17 to 33 (SLNNCPGTTPGTPMSKN). A Nuclear localization signal motif is present at residues 35–42 (LKKQRKLA). Basic and acidic residues-rich tracts occupy residues 40-58 (KLAEFAELRKLRREREREK), 78-87 (SRKELKKRQL), and 276-302 (KITDKKEPNHCLEQQDEKQKQEAESDK). The stretch at 44–67 (FAELRKLRREREREKKKQKRREAK) forms a coiled coil. Positions 83-274 (KKRQLADGGK…ETIPMRKGAK (192 aa)) constitute an SAM-dependent MTase TRM10-type domain.

Belongs to the class IV-like SAM-binding methyltransferase superfamily. TRM10 family.

The protein resides in the nucleus. It is found in the nucleolus. It localises to the chromosome. It catalyses the reaction guanosine(9) in tRNA + S-adenosyl-L-methionine = N(1)-methylguanosine(9) in tRNA + S-adenosyl-L-homocysteine + H(+). Functionally, S-adenosyl-L-methionine-dependent guanine N(1)-methyltransferase that catalyzes the formation of N(1)-methylguanine at position 9 (m1G9) in tRNAs. Modulates Mettl3-mediated N6-methyladenosine (m6A) methylation of mRNA 5'-UTRs and 3'-UTRs independent of its methyltransferase activity; influences mRNA stability and protein levels, in particular of Hsp70 chaperone proteins and other stress response proteins. Also regulates stability of transcripts encoding proteins involved in signaling processes and proteins involved in neurogenesis and axon guidance pathways. This is tRNA (guanine(9)-N(1))-methyltransferase Trmt10A from Drosophila melanogaster (Fruit fly).